A 160-amino-acid chain; its full sequence is Succinate dehydrogenase assembly factor 2-A, mitochondrial (160 aa).

The N-terminal 30 residues, 1–30 (MLRQLKLTLNISRWIFMPWQRQASASSSQV), are a transit peptide targeting the mitochondrion.

This sequence belongs to the SDHAF2 family. In terms of assembly, interacts with the flavoprotein subunit within the SDH catalytic dimer.

Its subcellular location is the mitochondrion matrix. In terms of biological role, plays an essential role in the assembly of succinate dehydrogenase (SDH), an enzyme complex (also referred to as respiratory complex II) that is a component of both the tricarboxylic acid (TCA) cycle and the mitochondrial electron transport chain, and which couples the oxidation of succinate to fumarate with the reduction of ubiquinone (coenzyme Q) to ubiquinol. Required for flavinylation (covalent attachment of FAD) of the flavoprotein subunit of the SDH catalytic dimer. The polypeptide is Succinate dehydrogenase assembly factor 2-A, mitochondrial (Drosophila persimilis (Fruit fly)).